The chain runs to 622 residues: Polyamine transporter 3 (622 aa).

Over residues 1-47 (MNRQESINSFNSDETSSLSDVESQQPQQYIPSESGSKSNMAPNQLKL) the composition is skewed to polar residues. The disordered stretch occupies residues 1–76 (MNRQESINSF…VPDVNAPQSS (76 aa)). Topologically, residues 1-182 (MNRQESINSF…WPAWIRWSYT (182 aa)) are cytoplasmic. S55 bears the Phosphoserine mark. T98 carries the post-translational modification Phosphothreonine. Phosphoserine occurs at positions 101 and 132. The interval 105–152 (TSTAISRTRTRQIDGASSPSSNEDALESDNNEKGKEGDSSGANDEAPD) is disordered. The chain crosses the membrane as a helical span at residues 183–203 (VLLSILVICVAYGSACISGGL). Residues 204-215 (GTVEKKYHVGME) are Extracellular-facing. The helical transmembrane segment at 216 to 236 (AAILSVSLMVIGFSLGPLIWS) threads the bilayer. The Cytoplasmic portion of the chain corresponds to 237-245 (PVSDLYGRR). Residues 246–266 (VAYFVSMGLYVIFNIPCALAP) form a helical membrane-spanning segment. The Extracellular segment spans residues 267 to 275 (NLGSLLACR). The chain crosses the membrane as a helical span at residues 276 to 296 (FLCGVWSSSGLCLVGGSIADM). Residues 297 to 305 (FPSETRGKA) are Cytoplasmic-facing. The helical transmembrane segment at 306 to 326 (IAFFAFAPYVGPVVGPLVNGF) threads the bilayer. Over 327–335 (ISVSTGRMD) the chain is Extracellular. A helical transmembrane segment spans residues 336–356 (LIFWVNMAFAGVMWIISSAIP). Over 357–416 (ETYAPVILKRKAARLRKETGNPKIMTEQEAQGVSMGEMMRACLLRPLYFSVTEPVLVATC) the chain is Cytoplasmic. Residues 417-437 (FYVCLIYSLLYAFFFAFPVIF) traverse the membrane as a helical segment. The Extracellular portion of the chain corresponds to 438 to 446 (GELYGYKDN). The helical transmembrane segment at 447 to 467 (LVGLMFIPIVIGALWALATTF) threads the bilayer. The Cytoplasmic portion of the chain corresponds to 468–487 (YCENKYLQIVKQRKPTPEDR). Residues 488–508 (LLGAKIGAPFAAIALWILGAT) form a helical membrane-spanning segment. Residues 509–512 (AYKH) are Extracellular-facing. A helical transmembrane segment spans residues 513–533 (IIWVGPASAGLAFGFGMVLIY). At 534-550 (YSLNNYIIDCYVQYASS) the chain is on the cytoplasmic side. The chain crosses the membrane as a helical span at residues 551-571 (ALATKVFLRSAGGAAFPLFTI). The Extracellular portion of the chain corresponds to 572–583 (QMYHKLNLHWGS). A helical membrane pass occupies residues 584–604 (WLLAFISTAMIALPFAFSYWG). Residues 605–622 (KGLRHKLSKKDYSIDSIE) lie on the Cytoplasmic side of the membrane.

The protein belongs to the major facilitator superfamily. DHA1 family. Polyamines/proton antiporter (TC 2.A.1.2.16) subfamily.

The protein localises to the cell membrane. In terms of biological role, cell membrane polyamine/proton antiporter, involved in the detoxification of excess polyamines in the cytoplasm. Recognizes spermine, but not spermidine. This chain is Polyamine transporter 3 (TPO3), found in Saccharomyces cerevisiae (strain ATCC 204508 / S288c) (Baker's yeast).